The sequence spans 78 residues: Small ribosomal subunit protein uS17 (78 aa).

It belongs to the universal ribosomal protein uS17 family. As to quaternary structure, part of the 30S ribosomal subunit.

Its function is as follows. One of the primary rRNA binding proteins, it binds specifically to the 5'-end of 16S ribosomal RNA. In Sinorhizobium medicae (strain WSM419) (Ensifer medicae), this protein is Small ribosomal subunit protein uS17.